We begin with the raw amino-acid sequence, 173 residues long: MATSAKESAVAELTDLFRESSAAVLTEYRGLTVTELKQLRDSIRQDATYAVAKNTLAEIAAKDAGLEGLEAHLSGPTAIAFVTGDPVNVAKALRDFAKDHEKLVLKGGYMDGQPLDEAGIKKLADLESREVLLAKFAGAMKGSMSKAAALFQAPLSKTVRTVEALRAAQGEAA.

This sequence belongs to the universal ribosomal protein uL10 family. Part of the ribosomal stalk of the 50S ribosomal subunit. The N-terminus interacts with L11 and the large rRNA to form the base of the stalk. The C-terminus forms an elongated spine to which L12 dimers bind in a sequential fashion forming a multimeric L10(L12)X complex.

Its function is as follows. Forms part of the ribosomal stalk, playing a central role in the interaction of the ribosome with GTP-bound translation factors. The chain is Large ribosomal subunit protein uL10 from Micrococcus luteus (strain ATCC 4698 / DSM 20030 / JCM 1464 / CCM 169 / CCUG 5858 / IAM 1056 / NBRC 3333 / NCIMB 9278 / NCTC 2665 / VKM Ac-2230) (Micrococcus lysodeikticus).